A 488-amino-acid chain; its full sequence is Palmitoleoyl-protein carboxylesterase notum1 (488 aa).

Residues 1 to 20 form the signal peptide; that stretch reads MAGALCVTLLLLLSTNTVSG. Asn90 carries an N-linked (GlcNAc...) asparagine glycan. Residues Ser226, Asp334, and His383 each act as charge relay system in the active site.

It belongs to the pectinacetylesterase family. Notum subfamily. In terms of tissue distribution, expressed in the egg and through cleavage to gastrulation stages. Enriched in the animal (prospective ectoderm) and dorsal regions in early gastrula. Shows a dynamic expression during embryogenesis, in particular during neural induction and antero-posterior (AP) patterning.

The protein localises to the secreted. The enzyme catalyses [Wnt protein]-O-(9Z)-hexadecenoyl-L-serine + H2O = [Wnt protein]-L-serine + (9Z)-hexadecenoate + H(+). Carboxylesterase that acts as a key negative regulator of the Wnt signaling pathway by specifically mediating depalmitoleoylation of WNT proteins. Serine palmitoleoylation of WNT proteins is required for efficient binding to frizzled receptors. Functions in the prospective ectoderm and is required for neural induction. The polypeptide is Palmitoleoyl-protein carboxylesterase notum1 (Xenopus laevis (African clawed frog)).